A 333-amino-acid chain; its full sequence is UDP-glucose 4-epimerase (333 aa).

NAD(+) contacts are provided by residues 11–12 (YI), 32–37 (DSLVTG), 52–53 (DL), 75–79 (FAAYS), asparagine 94, threonine 119, tyrosine 143, lysine 147, and phenylalanine 171. 2 residues coordinate substrate: threonine 119 and tyrosine 143. The active-site Proton acceptor is the tyrosine 143. Substrate is bound by residues asparagine 172, 191–192 (HL), 208–210 (MIF), arginine 223, and 284–287 (RSGD).

The protein belongs to the NAD(P)-dependent epimerase/dehydratase family. Homodimer. NAD(+) is required as a cofactor.

The catalysed reaction is UDP-alpha-D-glucose = UDP-alpha-D-galactose. It participates in carbohydrate metabolism; galactose metabolism. Its function is as follows. Involved in the metabolism of galactose. Catalyzes the conversion of UDP-galactose (UDP-Gal) to UDP-glucose (UDP-Glc) through a mechanism involving the transient reduction of NAD. In Streptococcus mutans serotype c (strain ATCC 700610 / UA159), this protein is UDP-glucose 4-epimerase (galE).